We begin with the raw amino-acid sequence, 407 residues long: Cathepsin D (407 aa).

Positions 1 to 20 (MQTPGVLLLILGLLDASSSA) are cleaved as a signal peptide. A propeptide spans 21 to 64 (LIRIPLRKFTSIRRTMTEVGGSVEDLILKGPITKYSMQSSPRTK) (activation peptide). In terms of domain architecture, Peptidase A1 spans 79-402 (YYGEIGIGTP…DREYNRVGFA (324 aa)). Cystine bridges form between cysteine 91/cysteine 160 and cysteine 110/cysteine 117. The active site involves aspartate 97. 2 N-linked (GlcNAc...) asparagine glycosylation sites follow: asparagine 134 and asparagine 258. A disulfide bridge connects residues cysteine 281 and cysteine 285. The active site involves aspartate 290. Cysteine 324 and cysteine 361 form a disulfide bridge.

This sequence belongs to the peptidase A1 family. As to quaternary structure, occurs as a mixture of both a single chain form and two types of two chain (light and heavy) forms. Interacts with ADAM30; this leads to activation of CTSD. Post-translationally, N- and O-glycosylated. Undergoes proteolytic cleavage and activation by ADAM30.

The protein localises to the lysosome. It localises to the melanosome. The protein resides in the secreted. It is found in the extracellular space. The catalysed reaction is Specificity similar to, but narrower than, that of pepsin A. Does not cleave the 4-Gln-|-His-5 bond in B chain of insulin.. Its function is as follows. Acid protease active in intracellular protein breakdown. Plays a role in APP processing following cleavage and activation by ADAM30 which leads to APP degradation. The protein is Cathepsin D (Ctsd) of Rattus norvegicus (Rat).